We begin with the raw amino-acid sequence, 485 residues long: Glutamyl-tRNA(Gln) amidotransferase subunit A (485 aa).

Active-site charge relay system residues include Lys-79 and Ser-154. The active-site Acyl-ester intermediate is the Ser-178.

It belongs to the amidase family. GatA subfamily. Heterotrimer of A, B and C subunits.

It carries out the reaction L-glutamyl-tRNA(Gln) + L-glutamine + ATP + H2O = L-glutaminyl-tRNA(Gln) + L-glutamate + ADP + phosphate + H(+). Its function is as follows. Allows the formation of correctly charged Gln-tRNA(Gln) through the transamidation of misacylated Glu-tRNA(Gln) in organisms which lack glutaminyl-tRNA synthetase. The reaction takes place in the presence of glutamine and ATP through an activated gamma-phospho-Glu-tRNA(Gln). The chain is Glutamyl-tRNA(Gln) amidotransferase subunit A from Clostridium botulinum (strain Langeland / NCTC 10281 / Type F).